A 449-amino-acid polypeptide reads, in one-letter code: Tapasin (449 aa).

A signal peptide spans 1–20 (MKPLSLLLAVASALGTAVSA). Over 21–413 (GPAVIECWMV…GLSGPSLEDS (393 aa)) the chain is Lumenal. C27 and C91 are disulfide-bonded. N-linked (GlcNAc...) asparagine glycosylation occurs at N253. Residues 292–399 (PKISLTPAPL…PTLGRSAEVT (108 aa)) enclose the Ig-like C1-type domain. C315 and C382 are oxidised to a cystine. A helical membrane pass occupies residues 414–434 (VGLFLSAFLLLGLIKALGWVA). The Cytoplasmic portion of the chain corresponds to 435 to 449 (ASRSTSKDPKEKKAQ).

Heterodimer with PDIA3; disulfide-linked. Obligatory mediator for the interaction between newly assembled MHC class I molecules, calreticulin, PDIA3 and TAP. Up to 4 MHC class I/tapasin complexes bind to 1 TAP. Interacts with HLA-G-B2M complex; this interaction is required for loading of high affinity peptides. On its own or as part of MHC class I peptide loading complex, interacts with ligand-free MR1 or MR1-B2M complex, providing for stable MR1 pools ready for metabolite antigen processing.

The protein localises to the endoplasmic reticulum membrane. Involved in the association of MHC class I with transporter associated with antigen processing (TAP) and in the assembly of MHC class I with peptide (peptide loading). The polypeptide is Tapasin (TAPBP) (Canis lupus familiaris (Dog)).